The following is a 370-amino-acid chain: 1-propanol dehydrogenase PduQ (370 aa).

This sequence belongs to the iron-containing alcohol dehydrogenase family. In terms of assembly, interacts with PduP, probably via the N-terminus of PduQ. Requires Fe cation as cofactor.

The protein localises to the bacterial microcompartment. The catalysed reaction is 1-propanol + NAD(+) = propanal + NADH + H(+). It functions in the pathway polyol metabolism; 1,2-propanediol degradation. Functionally, an iron-dependent alcohol dehydrogenase required for optimal 1,2-propanediol (1,2-PD) degradation. NAD(+) and NADH are regenerated internally within the bacterial microcompartment (BMC) dedicated to 1,2-PD degradation by the PduP and PduQ enzymes, which reduce NAD(+) and oxidize NADH respectively, although there must also be cofactor transport across the BMC. In terms of biological role, expression of a cosmid containing the full 21-gene pdu operon in E.coli allows E.coli to grow on 1,2-propanediol (1,2-PD) with the appearance of bacterial microcompartments (BMC) in its cytoplasm. Its function is as follows. The 1,2-PD-specific bacterial microcompartment (BMC) concentrates low levels of 1,2-PD catabolic enzymes, concentrates volatile reaction intermediates thus enhancing pathway flux and keeps the level of toxic, mutagenic propionaldehyde low. The polypeptide is 1-propanol dehydrogenase PduQ (Citrobacter freundii).